Reading from the N-terminus, the 621-residue chain is Phosphoenolpyruvate carboxykinase [GTP] (621 aa).

Substrate contacts are provided by residues Arg83 and 217–219 (YGG). Lys226 and His245 together coordinate Mn(2+). Residue Ser267 coordinates substrate. 268-273 (MCGKTS) is a binding site for GTP. Cys269 is a catalytic residue. Asp286 contributes to the Mn(2+) binding site. 381 to 383 (NAR) provides a ligand contact to substrate. Residues Arg383 and Arg415 each contribute to the GTP site.

This sequence belongs to the phosphoenolpyruvate carboxykinase [GTP] family. Mn(2+) is required as a cofactor.

It localises to the cytoplasm. It carries out the reaction oxaloacetate + GTP = phosphoenolpyruvate + GDP + CO2. It participates in carbohydrate biosynthesis; gluconeogenesis. Catalyzes the conversion of oxaloacetate (OAA) to phosphoenolpyruvate (PEP), the rate-limiting step in the metabolic pathway that produces glucose from lactate and other precursors derived from the citric acid cycle. This chain is Phosphoenolpyruvate carboxykinase [GTP], found in Pyrococcus horikoshii (strain ATCC 700860 / DSM 12428 / JCM 9974 / NBRC 100139 / OT-3).